Here is a 225-residue protein sequence, read N- to C-terminus: Ribose-5-phosphate isomerase A (225 aa).

Substrate-binding positions include 33 to 36, 86 to 89, and 99 to 102; these read TGST, DGAD, and KGGG. The active-site Proton acceptor is glutamate 108. Lysine 126 is a substrate binding site.

The protein belongs to the ribose 5-phosphate isomerase family. As to quaternary structure, homodimer.

The enzyme catalyses aldehydo-D-ribose 5-phosphate = D-ribulose 5-phosphate. Its pathway is carbohydrate degradation; pentose phosphate pathway; D-ribose 5-phosphate from D-ribulose 5-phosphate (non-oxidative stage): step 1/1. Its function is as follows. Catalyzes the reversible conversion of ribose-5-phosphate to ribulose 5-phosphate. This Bordetella petrii (strain ATCC BAA-461 / DSM 12804 / CCUG 43448) protein is Ribose-5-phosphate isomerase A.